The following is a 236-amino-acid chain: MADS-box transcription factor 3 (236 aa).

The MADS-box domain maps to 1-61 (MGRGKIEIKR…GRLYEYANNS (61 aa)). One can recognise a K-box domain in the interval 87–178 (AQHYQQESSK…RSKVVENERG (92 aa)).

Expressed in lemmas, paleas and lodicules.

Its subcellular location is the nucleus. In terms of biological role, probable transcription factor involved in the development of floral organs. Acts as C-class protein in association with MADS58. Involved in the control of lodicule number (whorl 2), stamen specification (whorl 3) and floral meristem determinacy (whorl 4), but not in the regulation of carpel morphogenesis. Plays a more predominant role in controlling lodicule development and in specifying stamen identity than MADS58. The protein is MADS-box transcription factor 3 (MADS3) of Oryza sativa subsp. japonica (Rice).